The chain runs to 345 residues: S-adenosylmethionine:tRNA ribosyltransferase-isomerase (345 aa).

It belongs to the QueA family. Monomer.

Its subcellular location is the cytoplasm. It carries out the reaction 7-aminomethyl-7-carbaguanosine(34) in tRNA + S-adenosyl-L-methionine = epoxyqueuosine(34) in tRNA + adenine + L-methionine + 2 H(+). It functions in the pathway tRNA modification; tRNA-queuosine biosynthesis. In terms of biological role, transfers and isomerizes the ribose moiety from AdoMet to the 7-aminomethyl group of 7-deazaguanine (preQ1-tRNA) to give epoxyqueuosine (oQ-tRNA). The chain is S-adenosylmethionine:tRNA ribosyltransferase-isomerase from Shewanella baltica (strain OS185).